A 170-amino-acid chain; its full sequence is Cytochrome bc1 complex Rieske iron-sulfur subunit (170 aa).

The Rieske domain maps to 63 to 153 (KAALMIIRLE…IGVNDEGYLE (91 aa)). Residues C96, H98, C115, and H118 each coordinate [2Fe-2S] cluster. Residues C101 and C117 are joined by a disulfide bond.

The cytochrome bc1 complex is composed of a cytochrome b (QcrB), the Rieske iron-sulfur protein (QcrA) and a diheme cytochrome c (QcrC) subunit. [2Fe-2S] cluster is required as a cofactor.

Its subcellular location is the cell membrane. Iron-sulfur subunit of the cytochrome bc1 complex, an essential component of the respiratory electron transport chain required for ATP synthesis. The bc1 complex catalyzes the oxidation of menaquinol and the reduction of cytochrome c in the respiratory chain. The bc1 complex operates through a Q-cycle mechanism that couples electron transfer to generation of the proton gradient that drives ATP synthesis. The polypeptide is Cytochrome bc1 complex Rieske iron-sulfur subunit (qcrA) (Streptomyces lividans).